The following is a 191-amino-acid chain: Cyclin-dependent kinase inhibitor 1 (191 aa).

Residues 62–81 (LIHLEEEDKDGDTETSTYRR) form a disordered region. The segment at 162–191 (QLKEKFKKKYNFDFEKEKPLEGRYEWVKLE) is required for inhibitory function and interaction with CDK kinase complexes.

It belongs to the CDI family. ICK/KRP subfamily. As to quaternary structure, specifically interacts with CDKA-1, but not with CDKB1-1. Interacts with CYCD2-1 and CYCD3-1. In terms of processing, ubiquitinated independently by RKP and SCF (SKP1-CUL1-FBL5/SKP2B) protein ligase complex, leading to proteasomal degradation. As to expression, expressed at low levels in roots, stems, leaves and flowers.

Its subcellular location is the nucleus. It localises to the nucleoplasm. In terms of biological role, binds and inhibits CYCD2-1/CDKA-1 kinase complex activity. Regulates cell division which is crucial for plant growth, development and morphogenesis. Functions in turning cells from a mitotic to an endoreplicating cell cycle mode. Acts cell- and non-cell-autonomously to regulate endoreduplication by allowing S phase progression, but blocking entry into mitosis. Keeps on the one hand the plant cell cycle locally controlled, and on the other hand provides a possibility of linking cell cycle control in single cells with the supracellular organization of a tissue or an organ. May target specifically CDKA-1. The chain is Cyclin-dependent kinase inhibitor 1 (KRP1) from Arabidopsis thaliana (Mouse-ear cress).